Consider the following 103-residue polypeptide: Secreted Ly-6/uPAR-related protein 1 (103 aa).

The N-terminal stretch at Met-1–Ala-22 is a signal peptide. In terms of domain architecture, UPAR/Ly6 spans Lys-24–Cys-73. Disulfide bonds link Cys-25/Cys-50, Cys-28/Cys-37, Cys-43/Cys-73, Cys-77/Cys-93, and Cys-94/Cys-99.

Homodimer. Interacts with PLAU. Interacts with CHRNA7. In terms of tissue distribution, granulocytes. Expressed in skin. Predominantly expressed in the granular layer of skin, notably the acrosyringium. Identified in several biological fluids such as sweat, saliva, tears, plasma and urine.

It is found in the secreted. Has an antitumor activity. Was found to be a marker of late differentiation of the skin. Implicated in maintaining the physiological and structural integrity of the keratinocyte layers of the skin. In vitro down-regulates keratinocyte proliferation; the function may involve the proposed role as modulator of nicotinic acetylcholine receptors (nAChRs) activity. In vitro inhibits alpha-7-dependent nAChR currents in an allosteric manner. In T cells may be involved in regulation of intracellular Ca(2+) signaling. Seems to have an immunomodulatory function in the cornea. The function may implicate a possible role as a scavenger receptor for PLAU thereby blocking PLAU-dependent functions of PLAUR such as in cell migration and proliferation. The protein is Secreted Ly-6/uPAR-related protein 1 (SLURP1) of Homo sapiens (Human).